We begin with the raw amino-acid sequence, 132 residues long: ATP synthase epsilon chain (132 aa).

Belongs to the ATPase epsilon chain family. As to quaternary structure, F-type ATPases have 2 components, CF(1) - the catalytic core - and CF(0) - the membrane proton channel. CF(1) has five subunits: alpha(3), beta(3), gamma(1), delta(1), epsilon(1). CF(0) has three main subunits: a, b and c.

It is found in the cell membrane. In terms of biological role, produces ATP from ADP in the presence of a proton gradient across the membrane. This is ATP synthase epsilon chain from Desulfitobacterium hafniense (strain DSM 10664 / DCB-2).